We begin with the raw amino-acid sequence, 76 residues long: Cytochrome c oxidase subunit 6C-2 (76 aa).

The Mitochondrial matrix segment spans residues 4–14 (GALLPKPQMRG). The helical transmembrane segment at 15–55 (LLAKRLRVHIVGAFVVALGVAAAYKFGVAEPRKKAYADFYR) threads the bilayer. At 56–76 (NYDSMKDFEEMRQAGVFQSAK) the chain is on the mitochondrial intermembrane side. Serine 74 carries the post-translational modification Phosphoserine.

It belongs to the cytochrome c oxidase subunit 6c family. In terms of assembly, component of the cytochrome c oxidase (complex IV, CIV), a multisubunit enzyme composed of 14 subunits. The complex is composed of a catalytic core of 3 subunits MT-CO1, MT-CO2 and MT-CO3, encoded in the mitochondrial DNA, and 11 supernumerary subunits COX4I, COX5A, COX5B, COX6A, COX6B, COX6C, COX7A, COX7B, COX7C, COX8 and NDUFA4, which are encoded in the nuclear genome. The complex exists as a monomer or a dimer and forms supercomplexes (SCs) in the inner mitochondrial membrane with NADH-ubiquinone oxidoreductase (complex I, CI) and ubiquinol-cytochrome c oxidoreductase (cytochrome b-c1 complex, complex III, CIII), resulting in different assemblies (supercomplex SCI(1)III(2)IV(1) and megacomplex MCI(2)III(2)IV(2)).

The protein resides in the mitochondrion inner membrane. It functions in the pathway energy metabolism; oxidative phosphorylation. In terms of biological role, component of the cytochrome c oxidase, the last enzyme in the mitochondrial electron transport chain which drives oxidative phosphorylation. The respiratory chain contains 3 multisubunit complexes succinate dehydrogenase (complex II, CII), ubiquinol-cytochrome c oxidoreductase (cytochrome b-c1 complex, complex III, CIII) and cytochrome c oxidase (complex IV, CIV), that cooperate to transfer electrons derived from NADH and succinate to molecular oxygen, creating an electrochemical gradient over the inner membrane that drives transmembrane transport and the ATP synthase. Cytochrome c oxidase is the component of the respiratory chain that catalyzes the reduction of oxygen to water. Electrons originating from reduced cytochrome c in the intermembrane space (IMS) are transferred via the dinuclear copper A center (CU(A)) of subunit 2 and heme A of subunit 1 to the active site in subunit 1, a binuclear center (BNC) formed by heme A3 and copper B (CU(B)). The BNC reduces molecular oxygen to 2 water molecules using 4 electrons from cytochrome c in the IMS and 4 protons from the mitochondrial matrix. In Rattus norvegicus (Rat), this protein is Cytochrome c oxidase subunit 6C-2 (Cox6c2).